The primary structure comprises 593 residues: Probable metalloprotease ARX1 (593 aa).

Belongs to the peptidase M24 family. In terms of assembly, component of the nucleoplasmic and cytoplasmic pre-60S ribosomal particles. Interacts directly with REI1.

The protein localises to the cytoplasm. Its subcellular location is the nucleus. Its function is as follows. Probable metalloprotease involved in proper assembly of pre-ribosomal particles during the biogenesis of the 60S ribosomal subunit. Accompanies the pre-60S particles to the cytoplasm. The chain is Probable metalloprotease ARX1 (ARX1) from Saccharomyces cerevisiae (strain ATCC 204508 / S288c) (Baker's yeast).